We begin with the raw amino-acid sequence, 687 residues long: Geranylgeranyl transferase type-2 subunit alpha 2 (687 aa).

PFTA repeat units lie at residues 38–72 (YTKEAIQLSAKLLITNPEFYTAWNYPKLAFESRLD), 83–117 (IIDEELGVVQNALERNVKSYGAWYHRKWVLSKKGH), 132–167 (YQKQAHQKQDDEKQDDPSRNFHAWNYRRFVVELTKT), 168–203 (SEEDELQYTTDMISDISFTIYSAWHYRSVLVSSLVA), and 214–248 (TIRRELDYVHSAIFTLEEKQSGWFYYLWLLDQTVK). LRR repeat units lie at residues 523 to 545 (MNNIICLRLNNLTLSRIAAVEKL), 546 to 567 (LFVQMLDLSHNELHSAEGLEAM), 568 to 591 (QLLCCLNLSHNRIRSFSALDSLRH), 592 to 616 (LKQLRVLDVSHNHICGELPVDTTRY), and 646 to 668 (LMKLKQLDIRGNDLIFAGEEFSS).

The protein belongs to the protein prenyltransferase subunit alpha family. Heterotrimer composed of the alpha subunit RGTA, the beta subunit RGTB and REP; within this trimer, RGTA and RGTB form the catalytic component, while REP mediates peptide substrate binding.

It catalyses the reaction geranylgeranyl diphosphate + L-cysteinyl-[protein] = S-geranylgeranyl-L-cysteinyl-[protein] + diphosphate. The enzymatic reaction requires the aid of the Rab escort protein REP. Functionally, catalyzes the transfer of a geranylgeranyl moiety from geranylgeranyl diphosphate to both cysteines of Rab proteins with the C-terminal sequence -CCXX, CXXX, -XCCX and -XCXC, such as RABA1A, RABA2A, RABF2A and RABG2. Does not seem to be a functional Rab-GGT alpha subunit in vitro. This chain is Geranylgeranyl transferase type-2 subunit alpha 2, found in Arabidopsis thaliana (Mouse-ear cress).